The sequence spans 207 residues: MPKVAVYNKEGATVGEITLSDAVFGAEVNPGLLHEVVQMYLANKRQGTADTKTRAEVSGGGRKPWRQKGTGRARHGSIRSPLWRKGGIVFGPHPREYGWSMPKKARRAALRQALSAKVKSGELIVVDKFELEAPKTREVATLLKNLKVDGSAFIVTAQEDVNIYKSARNIPGVRVNAARNLNAYDVLAASKLVFTQDAVAKVEEVLG.

The tract at residues 47–77 (GTADTKTRAEVSGGGRKPWRQKGTGRARHGS) is disordered. Basic residues predominate over residues 63 to 77 (KPWRQKGTGRARHGS).

The protein belongs to the universal ribosomal protein uL4 family. In terms of assembly, part of the 50S ribosomal subunit.

Its function is as follows. One of the primary rRNA binding proteins, this protein initially binds near the 5'-end of the 23S rRNA. It is important during the early stages of 50S assembly. It makes multiple contacts with different domains of the 23S rRNA in the assembled 50S subunit and ribosome. Forms part of the polypeptide exit tunnel. This is Large ribosomal subunit protein uL4 from Symbiobacterium thermophilum (strain DSM 24528 / JCM 14929 / IAM 14863 / T).